A 407-amino-acid polypeptide reads, in one-letter code: Rubber oxygenase (407 aa).

Residues 1 to 30 (MDGFSRRRMLMTGGALGAVGALGAATRALA) constitute a signal peptide (tat-type signal). H198 is a heme binding site.

It belongs to the rubber oxygenase Lcp family. Heme b serves as cofactor. Exported by the Tat system. The position of the signal peptide cleavage has not been experimentally proven.

It is found in the secreted. It participates in biopolymer metabolism. Involved in the initial step of rubber degradation. Catalyzes the oxidative C-C cleavage of poly(cis-1,4-isoprene) in synthetic as well as in natural rubber by the addition of oxygen (O2) to the double bonds, leading to a mixture of oligonucleotide-isoprenoids with terminal keto and aldehyde groups (endo-type cleavage). The cleavage products are of different lengths, ranging from C20 (four isoprene units) to higher oligo-isoprenoids. Is not able to cleave low-molecular-weight substrate analogs with isoprenoid structure such as squalene (1,4-trans-isoprenoid), carotenoids, or alpha-tocopherol. This chain is Rubber oxygenase, found in Streptomyces sp. (strain K30).